A 361-amino-acid chain; its full sequence is Phosphoserine aminotransferase (361 aa).

Arg43 is an L-glutamate binding site. Pyridoxal 5'-phosphate contacts are provided by residues 77–78, Trp103, Thr153, Asp173, and Gln196; that span reads AS. Lys197 is modified (N6-(pyridoxal phosphate)lysine). Position 238–239 (238–239) interacts with pyridoxal 5'-phosphate; the sequence is NT.

This sequence belongs to the class-V pyridoxal-phosphate-dependent aminotransferase family. SerC subfamily. As to quaternary structure, homodimer. It depends on pyridoxal 5'-phosphate as a cofactor.

The protein localises to the cytoplasm. It carries out the reaction O-phospho-L-serine + 2-oxoglutarate = 3-phosphooxypyruvate + L-glutamate. The catalysed reaction is 4-(phosphooxy)-L-threonine + 2-oxoglutarate = (R)-3-hydroxy-2-oxo-4-phosphooxybutanoate + L-glutamate. It functions in the pathway amino-acid biosynthesis; L-serine biosynthesis; L-serine from 3-phospho-D-glycerate: step 2/3. It participates in cofactor biosynthesis; pyridoxine 5'-phosphate biosynthesis; pyridoxine 5'-phosphate from D-erythrose 4-phosphate: step 3/5. Catalyzes the reversible conversion of 3-phosphohydroxypyruvate to phosphoserine and of 3-hydroxy-2-oxo-4-phosphonooxybutanoate to phosphohydroxythreonine. This chain is Phosphoserine aminotransferase, found in Pseudomonas syringae pv. tomato (strain ATCC BAA-871 / DC3000).